The chain runs to 121 residues: Small ribosomal subunit protein bS16 (121 aa).

Residues 85-110 (REARNNPKKAEPGKKAQERAAERAAK) are compositionally biased toward basic and acidic residues. The segment at 85-121 (REARNNPKKAEPGKKAQERAAERAAKAAEASEAASAE) is disordered. Positions 111–121 (AAEASEAASAE) are enriched in low complexity.

It belongs to the bacterial ribosomal protein bS16 family.

The chain is Small ribosomal subunit protein bS16 from Azorhizobium caulinodans (strain ATCC 43989 / DSM 5975 / JCM 20966 / LMG 6465 / NBRC 14845 / NCIMB 13405 / ORS 571).